The sequence spans 87 residues: Small ribosomal subunit protein uS17 (87 aa).

Belongs to the universal ribosomal protein uS17 family. As to quaternary structure, part of the 30S ribosomal subunit.

One of the primary rRNA binding proteins, it binds specifically to the 5'-end of 16S ribosomal RNA. The polypeptide is Small ribosomal subunit protein uS17 (Bacillus licheniformis (strain ATCC 14580 / DSM 13 / JCM 2505 / CCUG 7422 / NBRC 12200 / NCIMB 9375 / NCTC 10341 / NRRL NRS-1264 / Gibson 46)).